Consider the following 708-residue polypeptide: Transcriptional regulator nsrM (708 aa).

The zn(2)-C6 fungal-type DNA-binding region spans 37–63 (CVRCQQRKVRCDHKSPCGNCVASDSQC).

Its subcellular location is the nucleus. Transcriptional regulator; part of the gene cluster that mediates the biosynthesis of the tetrahydroxanthone dimer neosartorin, which exhibits antibacterial activity. The protein is Transcriptional regulator nsrM of Aspergillus novofumigatus (strain IBT 16806).